Reading from the N-terminus, the 860-residue chain is Leucine--tRNA ligase (860 aa).

A 'HIGH' region motif is present at residues 42–52 (PYPSGRLHMGH). The short motif at 619–623 (KMSKS) is the 'KMSKS' region element. Residue lysine 622 coordinates ATP.

Belongs to the class-I aminoacyl-tRNA synthetase family.

The protein resides in the cytoplasm. The catalysed reaction is tRNA(Leu) + L-leucine + ATP = L-leucyl-tRNA(Leu) + AMP + diphosphate. The sequence is that of Leucine--tRNA ligase from Salmonella typhimurium (strain LT2 / SGSC1412 / ATCC 700720).